Consider the following 1854-residue polypeptide: Protein virilizer (1854 aa).

A Phosphoserine modification is found at Ser186. 2 stretches are compositionally biased toward basic and acidic residues: residues 202–214 and 236–259; these read YHQH…QREM and THSE…DWSR. 5 disordered regions span residues 202 to 361, 777 to 821, 1570 to 1589, 1720 to 1788, and 1804 to 1854; these read YHQH…EIIG, NPEE…GKPV, TSTE…ASSC, VRGR…NRGS, and IGSP…SYLR. Ser258, Ser260, and Ser276 each carry phosphoserine. Over residues 275–285 the composition is skewed to basic and acidic residues; it reads RSRSVVDEHKW. Phosphothreonine is present on Thr288. Position 295 is a phosphoserine (Ser295). Phosphothreonine is present on Thr297. Ser301 and Ser312 each carry phosphoserine. Composition is skewed to basic and acidic residues over residues 325–343 and 777–796; these read HSSE…EDRS and NPEE…KAME. Residues 779–808 are a coiled coil; sequence EEKEEKAEKSDAEDKAMEVENEAVEAGGEK. 2 stretches are compositionally biased toward low complexity: residues 1738 to 1748 and 1816 to 1838; these read SRPPNTSRPPS and SYRS…PHYS.

Belongs to the vir family. In terms of assembly, component of the WMM complex, a N6-methyltransferase complex composed of a catalytic subcomplex, named MAC, and of an associated subcomplex, named MACOM. The MAC subcomplex is composed of Ime4/Mettl3 and Mettl14. The MACOM subcomplex is composed of fl(2)d, Flacc/Xio, Hakai, vir, and, in some cases of nito. Part of a complex containing fl(2)d, Sxl and vir.

It localises to the nucleus. In terms of biological role, associated component of the WMM complex, a complex that mediates N6-methyladenosine (m6A) methylation of mRNAs, a modification that plays a role in the efficiency of mRNA splicing and is required for sex determination. Required for sex determination and dosage compensation via Sxl alternative splicing: m6A methylation acts as a key regulator of Sxl pre-mRNA and promotes female-specific alternative splicing of Sxl, which determines female physiognomy. M6A methylation is also required for neuronal functions. Required for proper inclusion of regulated exons in Ubx transcripts, leading to isoforms Ia/b and IIa/b. The chain is Protein virilizer from Drosophila melanogaster (Fruit fly).